A 312-amino-acid polypeptide reads, in one-letter code: Beta-ketoacyl-[acyl-carrier-protein] synthase III (312 aa).

Active-site residues include C112 and H237. Positions 238 to 242 (QANIR) are ACP-binding. N267 is a catalytic residue.

The protein belongs to the thiolase-like superfamily. FabH family. Homodimer.

The protein resides in the cytoplasm. The catalysed reaction is malonyl-[ACP] + acetyl-CoA + H(+) = 3-oxobutanoyl-[ACP] + CO2 + CoA. It functions in the pathway lipid metabolism; fatty acid biosynthesis. Functionally, catalyzes the condensation reaction of fatty acid synthesis by the addition to an acyl acceptor of two carbons from malonyl-ACP. Catalyzes the first condensation reaction which initiates fatty acid synthesis and may therefore play a role in governing the total rate of fatty acid production. Possesses both acetoacetyl-ACP synthase and acetyl transacylase activities. Its substrate specificity determines the biosynthesis of branched-chain and/or straight-chain of fatty acids. This is Beta-ketoacyl-[acyl-carrier-protein] synthase III from Listeria innocua serovar 6a (strain ATCC BAA-680 / CLIP 11262).